The primary structure comprises 583 residues: Arginine--tRNA ligase (583 aa).

Positions 131–141 (ANPTGPMHVGH) match the 'HIGH' region motif.

This sequence belongs to the class-I aminoacyl-tRNA synthetase family. As to quaternary structure, monomer.

Its subcellular location is the cytoplasm. The catalysed reaction is tRNA(Arg) + L-arginine + ATP = L-arginyl-tRNA(Arg) + AMP + diphosphate. The chain is Arginine--tRNA ligase from Parvibaculum lavamentivorans (strain DS-1 / DSM 13023 / NCIMB 13966).